The sequence spans 75 residues: DNA-directed RNA polymerase subunit omega (75 aa).

The protein belongs to the RNA polymerase subunit omega family. In terms of assembly, in cyanobacteria the RNAP catalytic core is composed of 2 alpha, 1 beta, 1 beta', 1 gamma and 1 omega subunit. When a sigma factor is associated with the core the holoenzyme is formed, which can initiate transcription.

It catalyses the reaction RNA(n) + a ribonucleoside 5'-triphosphate = RNA(n+1) + diphosphate. Promotes RNA polymerase assembly. Latches the N- and C-terminal regions of the beta' subunit thereby facilitating its interaction with the beta and alpha subunits. The protein is DNA-directed RNA polymerase subunit omega of Cyanothece sp. (strain PCC 7425 / ATCC 29141).